Consider the following 906-residue polypeptide: Rho GTPase-activating protein gacJ (906 aa).

Positions 53–117 (LEGHLNPSSH…RDNSRSDNIR (65 aa)) are disordered. A compositionally biased stretch (low complexity) spans 69-79 (NNNNNNNNNNN). Over residues 92–117 (SRSDSKHHNRENSKSDRDNSRSDNIR) the composition is skewed to basic and acidic residues. The Rho-GAP domain maps to 161–348 (EELQSLYPDQ…YMLEYFNDIF (188 aa)). 3 disordered regions span residues 368–415 (DTTS…SRSK), 452–864 (EIIP…SVLT), and 877–906 (ANQA…NINK). Over residues 381 to 404 (NGGSPRTSNTPYQQQHQLSSQSMA) the composition is skewed to polar residues. Low complexity predominate over residues 461-487 (TTTTTTTTTNTTTTTTTTNTTPNNTTT). 2 stretches are compositionally biased toward pro residues: residues 494–510 (PVPP…PPNP) and 547–560 (QPPP…PSPP). A compositionally biased stretch (polar residues) spans 565-574 (KPTSKSDFIP). Composition is skewed to low complexity over residues 575-597 (STNN…SIPK) and 613-629 (IEEP…TTTT). Polar residues predominate over residues 637 to 649 (FKNNGTISSGSKS). Low complexity-rich tracts occupy residues 650–663 (NPNL…NQPL) and 683–694 (SKPITTTPTIKK). Positions 708–721 (PPSPSSSSPSPPHN) are enriched in pro residues. 3 stretches are compositionally biased toward low complexity: residues 754–772 (PTIP…PTTP), 785–816 (PPIN…STPK), and 844–861 (SSPT…SSPS). Residues 880–890 (AKKNPLSNSGG) are compositionally biased toward polar residues.

The protein resides in the cytoplasm. In terms of biological role, rho GTPase-activating protein involved in the signal transduction pathway. This chain is Rho GTPase-activating protein gacJ (gacJ), found in Dictyostelium discoideum (Social amoeba).